The sequence spans 506 residues: Deoxyribodipyrimidine photo-lyase (506 aa).

Over residues 1–21 (MPPTSVSPPRTAPGPANPSPA) the composition is skewed to pro residues. The segment at 1–33 (MPPTSVSPPRTAPGPANPSPAHPSRVRVIHPGG) is disordered. The Photolyase/cryptochrome alpha/beta domain maps to 38–171 (GPVVYWMLRD…AVHQVDAHNV (134 aa)). Residues tyrosine 268 and 282 to 285 (SGLS) contribute to the FAD site. Serine 312 carries the phosphoserine modification. FAD is bound by residues 319 to 327 (ELVVRRELA), lysine 390, asparagine 421, aspartate 427, and 427 to 429 (DGR). The disordered stretch occupies residues 487–506 (KKRNAEESPNPVVKLSKSQH).

The protein belongs to the DNA photolyase class-2 family. The cofactor is FAD. In terms of tissue distribution, expressed in proliferating tissues. Highly expressed in roots and shoot apical meristem (SAM). Expressed in leaves, flag leaves, and panicle.

The protein localises to the nucleus. It carries out the reaction cyclobutadipyrimidine (in DNA) = 2 pyrimidine residues (in DNA).. Its function is as follows. Involved in repair of UV radiation-induced DNA damage. Catalyzes the light-dependent monomerization (300-600 nm) of cyclobutylpyrimidine dimers (CPDs), which are formed between adjacent bases on the same DNA strand upon exposure to ultraviolet radiation. Required for plant survival in the presence of UV-B light. Not involved in the repair of (6-4) photoproducts. The polypeptide is Deoxyribodipyrimidine photo-lyase (PHR) (Oryza sativa subsp. japonica (Rice)).